The primary structure comprises 118 residues: Large ribosomal subunit protein uL22 (118 aa).

This sequence belongs to the universal ribosomal protein uL22 family. In terms of assembly, part of the 50S ribosomal subunit.

In terms of biological role, this protein binds specifically to 23S rRNA; its binding is stimulated by other ribosomal proteins, e.g. L4, L17, and L20. It is important during the early stages of 50S assembly. It makes multiple contacts with different domains of the 23S rRNA in the assembled 50S subunit and ribosome. The globular domain of the protein is located near the polypeptide exit tunnel on the outside of the subunit, while an extended beta-hairpin is found that lines the wall of the exit tunnel in the center of the 70S ribosome. In Levilactobacillus brevis (strain ATCC 367 / BCRC 12310 / CIP 105137 / JCM 1170 / LMG 11437 / NCIMB 947 / NCTC 947) (Lactobacillus brevis), this protein is Large ribosomal subunit protein uL22.